The sequence spans 423 residues: Tumor necrosis factor receptor superfamily member 19 (423 aa).

A signal peptide spans 1 to 29 (MALKVLLEQEKTFFTLLVLLGYLSCKVTC). At 30–170 (ESGDCRQQEF…TASSPRDTAL (141 aa)) the chain is on the extracellular side. TNFR-Cys repeat units lie at residues 33–72 (DCRQQEFRDRSGNCVPCNQCGPGMELSKECGFGYGEDAQC), 74–114 (TCRL…DAIC), and 116–149 (DCLPGFYRKTKLVGFQDMECVPCGDPPPPYEPHC). 8 cysteine pairs are disulfide-bonded: C34-C46, C49-C62, C52-C72, C75-C89, C92-C106, C95-C114, C117-C135, and C138-C149. N105 is a glycosylation site (N-linked (GlcNAc...) asparagine). Residues 171 to 191 (AAVICSALATVLLALLILCVI) traverse the membrane as a helical segment. The Cytoplasmic segment spans residues 192–423 (YCKRQFMEKK…LQVRQRLGSL (232 aa)).

Associates with TRAF1, TRAF2, TRAF3 and TRAF5. Interacts with LINGO1. Highly expressed in prostate. Detected at lower levels in thymus, spleen, testis, uterus, small intestine, colon and peripheral blood leukocytes.

It localises to the membrane. Its function is as follows. Can mediate activation of JNK and NF-kappa-B. May promote caspase-independent cell death. This chain is Tumor necrosis factor receptor superfamily member 19 (TNFRSF19), found in Homo sapiens (Human).